The primary structure comprises 1391 residues: Nuclear pore complex protein Nup155 (1391 aa).

Residue S526 is glycosylated (O-linked (GlcNAc) serine). Disordered regions lie at residues 604–630 (SSSP…AQPP) and 985–1012 (QSKA…NMLS). S1057 is subject to Phosphoserine.

It belongs to the non-repetitive/WGA-negative nucleoporin family. As to quaternary structure, interacts with GLE1 and NUP35/NUP53. Able to form a heterotrimer with GLE1 and NUP42 in vitro. Forms a complex with NUP35, NUP93, NUP205 and lamin B. Post-translationally, phosphorylated. Phosphorylation and dephosphorylation may be important for the function of NUP155 and may play a role in the reversible disassembly of the nuclear pore complex during mitosis. In terms of processing, disulfide-linked to NUP62. The inner channel of the NPC has a different redox environment from the cytoplasm and allows the formation of interchain disulfide bonds between some nucleoporins, the significant increase of these linkages upon oxidative stress reduces the permeability of the NPC.

The protein resides in the nucleus. It is found in the nuclear pore complex. It localises to the nucleus membrane. In terms of biological role, essential component of nuclear pore complex. Could be essessential for embryogenesis. Nucleoporins may be involved both in binding and translocating proteins during nucleocytoplasmic transport. The polypeptide is Nuclear pore complex protein Nup155 (Nup155) (Mus musculus (Mouse)).